The chain runs to 402 residues: Arginine deiminase (402 aa).

Cys-392 acts as the Amidino-cysteine intermediate in catalysis.

It belongs to the arginine deiminase family.

The protein resides in the cytoplasm. The catalysed reaction is L-arginine + H2O = L-citrulline + NH4(+). Its pathway is amino-acid degradation; L-arginine degradation via ADI pathway; carbamoyl phosphate from L-arginine: step 1/2. In Mycobacterium avium (strain 104), this protein is Arginine deiminase.